The primary structure comprises 472 residues: MAGKTLYDKLWDDHVVTQRDDGSCLLYIDRHLLHEVTSPQAFEGLQLAGRQPWRLSANVATPDHNVPTSKKERDQGIAGIEDDTSRIQVQTLDDNCKAFNIVEFGINDIRQGIVHVVGPEQGLTLPGMTVVCGDSHTATHGAFGCLAHGIGTSEVEHVLATQCLVQKKSKNMLVRVDGVLGKGVTPKDVVLAIIGKIGTAGGTGYAIEFGGQVFRDMSIEGRMTVCNMAIEAGARVGMVAVDEKTIEYVKGRSYAPKGEQWDQAVAYWNTLHSDDDAVFDAVVELNGTEIEPQVSWGTSPEMVIPVSKAVPTLEQAKDDVQRNDWTRAYQYMGLNAGQALADIQLDRVFIGSCTNSRIEDIRAAAEVVKGRKVAPSIKQAMIVPGSGLVKQQAEKEGLDKIFLEAGFEWREPGCSMCLAMNADKLQPGEHCASTSNRNFEGRQGNGGRTHLVSPAMAAAAAIAGHFVDVRSF.

[4Fe-4S] cluster is bound by residues cysteine 353, cysteine 414, and cysteine 417.

It belongs to the aconitase/IPM isomerase family. LeuC type 1 subfamily. As to quaternary structure, heterodimer of LeuC and LeuD. Requires [4Fe-4S] cluster as cofactor.

The catalysed reaction is (2R,3S)-3-isopropylmalate = (2S)-2-isopropylmalate. Its pathway is amino-acid biosynthesis; L-leucine biosynthesis; L-leucine from 3-methyl-2-oxobutanoate: step 2/4. Its function is as follows. Catalyzes the isomerization between 2-isopropylmalate and 3-isopropylmalate, via the formation of 2-isopropylmaleate. The protein is 3-isopropylmalate dehydratase large subunit of Acinetobacter baumannii (strain ATCC 17978 / DSM 105126 / CIP 53.77 / LMG 1025 / NCDC KC755 / 5377).